The following is a 678-amino-acid chain: DNA ligase (678 aa).

NAD(+)-binding positions include Asp-47–Asp-51, Ser-96–Leu-97, and Glu-122. The active-site N6-AMP-lysine intermediate is Lys-124. 4 residues coordinate NAD(+): Arg-145, Glu-182, Lys-300, and Lys-324. Cys-418, Cys-421, Cys-436, and Cys-442 together coordinate Zn(2+). Residues Ala-602–Leu-678 enclose the BRCT domain.

This sequence belongs to the NAD-dependent DNA ligase family. LigA subfamily. It depends on Mg(2+) as a cofactor. Requires Mn(2+) as cofactor.

It carries out the reaction NAD(+) + (deoxyribonucleotide)n-3'-hydroxyl + 5'-phospho-(deoxyribonucleotide)m = (deoxyribonucleotide)n+m + AMP + beta-nicotinamide D-nucleotide.. In terms of biological role, DNA ligase that catalyzes the formation of phosphodiester linkages between 5'-phosphoryl and 3'-hydroxyl groups in double-stranded DNA using NAD as a coenzyme and as the energy source for the reaction. It is essential for DNA replication and repair of damaged DNA. In Francisella philomiragia subsp. philomiragia (strain ATCC 25017 / CCUG 19701 / FSC 153 / O#319-036), this protein is DNA ligase.